We begin with the raw amino-acid sequence, 410 residues long: LL-diaminopimelate aminotransferase (410 aa).

Residues Tyr-15 and Gly-42 each coordinate substrate. Pyridoxal 5'-phosphate-binding positions include Tyr-72, 108-109 (SK), Tyr-132, Asn-187, Tyr-218, and 246-248 (SFS). Substrate contacts are provided by Lys-109, Tyr-132, and Asn-187. Position 249 is an N6-(pyridoxal phosphate)lysine (Lys-249). Pyridoxal 5'-phosphate is bound by residues Arg-257 and Asn-292. 2 residues coordinate substrate: Asn-292 and Arg-388.

This sequence belongs to the class-I pyridoxal-phosphate-dependent aminotransferase family. LL-diaminopimelate aminotransferase subfamily. As to quaternary structure, homodimer. Requires pyridoxal 5'-phosphate as cofactor.

It carries out the reaction (2S,6S)-2,6-diaminopimelate + 2-oxoglutarate = (S)-2,3,4,5-tetrahydrodipicolinate + L-glutamate + H2O + H(+). Its pathway is amino-acid biosynthesis; L-lysine biosynthesis via DAP pathway; LL-2,6-diaminopimelate from (S)-tetrahydrodipicolinate (aminotransferase route): step 1/1. Its function is as follows. Involved in the synthesis of meso-diaminopimelate (m-DAP or DL-DAP), required for both lysine and peptidoglycan biosynthesis. Catalyzes the direct conversion of tetrahydrodipicolinate to LL-diaminopimelate. This chain is LL-diaminopimelate aminotransferase, found in Geotalea daltonii (strain DSM 22248 / JCM 15807 / FRC-32) (Geobacter daltonii).